Here is a 138-residue protein sequence, read N- to C-terminus: Putative nickel-responsive regulator (138 aa).

4 residues coordinate Ni(2+): His-78, His-89, His-91, and Cys-97.

The protein belongs to the transcriptional regulatory CopG/NikR family. Ni(2+) serves as cofactor.

In terms of biological role, transcriptional regulator. The chain is Putative nickel-responsive regulator from Thermococcus kodakarensis (strain ATCC BAA-918 / JCM 12380 / KOD1) (Pyrococcus kodakaraensis (strain KOD1)).